Here is a 294-residue protein sequence, read N- to C-terminus: Release factor glutamine methyltransferase (294 aa).

Residues 131–135 (GTGSG), aspartate 154, and asparagine 202 contribute to the S-adenosyl-L-methionine site. 202–205 (NPPY) lines the substrate pocket.

The protein belongs to the protein N5-glutamine methyltransferase family. PrmC subfamily.

The enzyme catalyses L-glutaminyl-[peptide chain release factor] + S-adenosyl-L-methionine = N(5)-methyl-L-glutaminyl-[peptide chain release factor] + S-adenosyl-L-homocysteine + H(+). Methylates the class 1 translation termination release factors RF1/PrfA and RF2/PrfB on the glutamine residue of the universally conserved GGQ motif. The protein is Release factor glutamine methyltransferase of Chlorobaculum tepidum (strain ATCC 49652 / DSM 12025 / NBRC 103806 / TLS) (Chlorobium tepidum).